The chain runs to 356 residues: SERTA domain-containing protein 4 (356 aa).

The interval 33 to 53 (SYGGPSPPGPAQAPLQGDRGA) is disordered. One can recognise an SERTA domain in the interval 101–147 (IFEERAHILYMSLEKLKFIDDPEVYLRRSVLINNLMKRIHGEIIMQN). The segment covering 215–232 (TAASSPSASSSSSSSSSS) has biased composition (low complexity). 3 disordered regions span residues 215-238 (TAASSPSASSSSSSSSSSPPLPLP), 280-302 (KLNDEKANDDTNRDGGPLSHEPV), and 332-356 (WKKSLRKKEASPPSNKLCCSKGSKI). Residues 280-292 (KLNDEKANDDTNR) are compositionally biased toward basic and acidic residues.

The sequence is that of SERTA domain-containing protein 4 (SERTAD4) from Homo sapiens (Human).